Reading from the N-terminus, the 181-residue chain is Gastrokine-3 (181 aa).

The N-terminal stretch at 1–20 is a signal peptide; that stretch reads MKHLVASSILGVFVLTPSLA. Residues 53-145 enclose the BRICHOS domain; sequence NNIFSEWDGI…MCRDDPTYFA (93 aa). A disulfide bond links C80 and C137.

It belongs to the gastrokine family.

It is found in the secreted. Its function is as follows. May inhibit gastric epithelial cell proliferation. This is Gastrokine-3 (GKN3P) from Homo sapiens (Human).